A 124-amino-acid polypeptide reads, in one-letter code: Glycine cleavage system H protein (124 aa).

One can recognise a Lipoyl-binding domain in the interval 22–103; it reads VFVVGITDNA…AYTAWIFKIK (82 aa). An N6-lipoyllysine modification is found at Lys63.

The protein belongs to the GcvH family. As to quaternary structure, the glycine cleavage system is composed of four proteins: P, T, L and H. The cofactor is (R)-lipoate.

Its function is as follows. The glycine cleavage system catalyzes the degradation of glycine. The H protein shuttles the methylamine group of glycine from the P protein to the T protein. The sequence is that of Glycine cleavage system H protein from Bordetella pertussis (strain Tohama I / ATCC BAA-589 / NCTC 13251).